A 175-amino-acid polypeptide reads, in one-letter code: ATP synthase subunit b (175 aa).

The helical transmembrane segment at 20–40 (LIFWTAVTFVIVLLILKQLAW) threads the bilayer.

The protein belongs to the ATPase B chain family. In terms of assembly, F-type ATPases have 2 components, F(1) - the catalytic core - and F(0) - the membrane proton channel. F(1) has five subunits: alpha(3), beta(3), gamma(1), delta(1), epsilon(1). F(0) has four main subunits: a(1), b(2) and c(10-14). The alpha and beta chains form an alternating ring which encloses part of the gamma chain. F(1) is attached to F(0) by a central stalk formed by the gamma and epsilon chains, while a peripheral stalk is formed by the delta and b chains.

The protein resides in the cell inner membrane. Functionally, f(1)F(0) ATP synthase produces ATP from ADP in the presence of a proton or sodium gradient. F-type ATPases consist of two structural domains, F(1) containing the extramembraneous catalytic core and F(0) containing the membrane proton channel, linked together by a central stalk and a peripheral stalk. During catalysis, ATP synthesis in the catalytic domain of F(1) is coupled via a rotary mechanism of the central stalk subunits to proton translocation. Its function is as follows. Component of the F(0) channel, it forms part of the peripheral stalk, linking F(1) to F(0). This is ATP synthase subunit b from Chlorobium limicola (strain DSM 245 / NBRC 103803 / 6330).